The following is a 106-amino-acid chain: Large ribosomal subunit protein bL21 (106 aa).

The protein belongs to the bacterial ribosomal protein bL21 family. As to quaternary structure, part of the 50S ribosomal subunit. Contacts protein L20.

In terms of biological role, this protein binds to 23S rRNA in the presence of protein L20. The chain is Large ribosomal subunit protein bL21 from Thermosipho africanus (strain TCF52B).